We begin with the raw amino-acid sequence, 529 residues long: DNA-binding protein (529 aa).

Over residues 1 to 17 the composition is skewed to basic and acidic residues; that stretch reads MASREEEQRETTPERGR. Disordered regions lie at residues 1-107 and 125-166; these read MASR…IVDS and PVLI…AESE. The segment covering 129 to 139 has biased composition (basic residues); sequence KHGKGGKRTVR. Positions 155–165 are enriched in acidic residues; the sequence is EEEEEPSEAES. Residue Tyr-195 is modified to Phosphotyrosine; by host. Residues Cys-284 and His-286 each contribute to the Zn(2+) site. Residues 297 to 331 form a flexible loop region; the sequence is IEMDVTSENGQRALKEQSSKAKIVKNRWGRNVVQI. Zn(2+) is bound by residues Cys-339, Cys-355, Cys-396, Cys-398, Cys-450, and Cys-467. Residues 513–529 form a C-terminal arm, DBP binding region; the sequence is VSLPVAHSDARQNPFDF.

It belongs to the adenoviridae E2A DNA-binding protein family. In terms of assembly, homomultimerizes on viral ssDNA bound to pTP. Forms a initiation complex with viral polymerase, pTP and hosts NFIA and POU2F1/OCT1. Interacts with host SRCAP.

The protein resides in the host nucleus. In terms of biological role, plays a role in the elongation phase of viral strand displacement replication by unwinding the template in an ATP-independent fashion, employing its capacity to form multimers. Also enhances the rate of initiation. Released from template upon second strand synthesis. Assembles in complex with viral pTP, viral pol, host NFIA and host POU2F1/OCT1 on viral origin of replication. Covers the whole ssDNA genome during synthesis. The complementary strand synthesis induces its relese from DNA template. May inhibit cellular transcription mediated by the interaction between host SRCAP and CBP. The chain is DNA-binding protein from Human adenovirus C serotype 5 (HAdV-5).